Consider the following 881-residue polypeptide: Valine--tRNA ligase (881 aa).

The short motif at 42–52 is the 'HIGH' region element; the sequence is PNITGDLHVGH. Positions 554 to 558 match the 'KMSKS' region motif; that stretch reads KMSKS. Lysine 557 is a binding site for ATP.

Belongs to the class-I aminoacyl-tRNA synthetase family. ValS type 1 subfamily. Monomer.

Its subcellular location is the cytoplasm. It catalyses the reaction tRNA(Val) + L-valine + ATP = L-valyl-tRNA(Val) + AMP + diphosphate. Functionally, catalyzes the attachment of valine to tRNA(Val). As ValRS can inadvertently accommodate and process structurally similar amino acids such as threonine, to avoid such errors, it has a 'posttransfer' editing activity that hydrolyzes mischarged Thr-tRNA(Val) in a tRNA-dependent manner. The sequence is that of Valine--tRNA ligase from Wigglesworthia glossinidia brevipalpis.